A 391-amino-acid polypeptide reads, in one-letter code: Phosphoglycerate kinase (391 aa).

Residues 21–23, R36, 59–62, R113, and R146 contribute to the substrate site; these read DLN and HLGR. ATP is bound by residues K197, E319, and 345–348; that span reads GGDT.

Belongs to the phosphoglycerate kinase family. As to quaternary structure, monomer.

It localises to the cytoplasm. The enzyme catalyses (2R)-3-phosphoglycerate + ATP = (2R)-3-phospho-glyceroyl phosphate + ADP. Its pathway is carbohydrate degradation; glycolysis; pyruvate from D-glyceraldehyde 3-phosphate: step 2/5. This is Phosphoglycerate kinase from Stenotrophomonas maltophilia (strain K279a).